Consider the following 242-residue polypeptide: Large ribosomal subunit protein uL1 (242 aa).

The protein belongs to the universal ribosomal protein uL1 family. Part of the 50S ribosomal subunit.

In terms of biological role, binds directly to 23S rRNA. The L1 stalk is quite mobile in the ribosome, and is involved in E site tRNA release. Protein L1 is also a translational repressor protein, it controls the translation of the L11 operon by binding to its mRNA. In Streptomyces virginiae (Streptomyces cinnamonensis), this protein is Large ribosomal subunit protein uL1.